The following is a 383-amino-acid chain: Hydroxymethylglutaryl-CoA synthase (383 aa).

D29 provides a ligand contact to (3S)-3-hydroxy-3-methylglutaryl-CoA. Residue E79 is the Proton donor/acceptor of the active site. (3S)-3-hydroxy-3-methylglutaryl-CoA is bound by residues C111, T152, S201, H233, K242, N275, and S308. The Acyl-thioester intermediate role is filled by C111. H233 acts as the Proton donor/acceptor in catalysis.

Belongs to the thiolase-like superfamily. HMG-CoA synthase family. As to quaternary structure, homodimer.

It carries out the reaction acetoacetyl-CoA + acetyl-CoA + H2O = (3S)-3-hydroxy-3-methylglutaryl-CoA + CoA + H(+). The protein operates within metabolic intermediate biosynthesis; (R)-mevalonate biosynthesis; (R)-mevalonate from acetyl-CoA: step 2/3. Is sensitive to feedback substrate inhibition by acetoacetyl-CoA. Is inactivated by hymeglusin, which also blocks the growth of E.faecalis, indicating the critical role that the mevalonate pathway plays in isoprenoid biosynthesis. Its function is as follows. Catalyzes the condensation of acetyl-CoA with acetoacetyl-CoA to form 3-hydroxy-3-methylglutaryl-CoA (HMG-CoA). Functions in the mevalonate (MVA) pathway leading to isopentenyl diphosphate (IPP), a key precursor for the biosynthesis of isoprenoid compounds. The chain is Hydroxymethylglutaryl-CoA synthase (mvaS) from Enterococcus faecalis (Streptococcus faecalis).